Here is a 589-residue protein sequence, read N- to C-terminus: Aspartate--tRNA ligase (589 aa).

Glutamate 172 is a binding site for L-aspartate. The interval 196-199 (QLFK) is aspartate. Residue arginine 218 coordinates L-aspartate. ATP contacts are provided by residues 218–220 (RDE) and glutamine 227. Histidine 449 is a binding site for L-aspartate. ATP is bound at residue glutamate 483. Position 490 (arginine 490) interacts with L-aspartate. Residue 535–538 (GLDR) participates in ATP binding.

It belongs to the class-II aminoacyl-tRNA synthetase family. Type 1 subfamily. Homodimer.

Its subcellular location is the cytoplasm. The enzyme catalyses tRNA(Asp) + L-aspartate + ATP = L-aspartyl-tRNA(Asp) + AMP + diphosphate. In terms of biological role, catalyzes the attachment of L-aspartate to tRNA(Asp) in a two-step reaction: L-aspartate is first activated by ATP to form Asp-AMP and then transferred to the acceptor end of tRNA(Asp). This chain is Aspartate--tRNA ligase, found in Haemophilus ducreyi (strain 35000HP / ATCC 700724).